The primary structure comprises 208 residues: Ribosomal RNA large subunit methyltransferase E (208 aa).

Positions 62, 64, 82, 98, and 123 each coordinate S-adenosyl-L-methionine. Catalysis depends on lysine 163, which acts as the Proton acceptor.

Belongs to the class I-like SAM-binding methyltransferase superfamily. RNA methyltransferase RlmE family.

Its subcellular location is the cytoplasm. It carries out the reaction uridine(2552) in 23S rRNA + S-adenosyl-L-methionine = 2'-O-methyluridine(2552) in 23S rRNA + S-adenosyl-L-homocysteine + H(+). Its function is as follows. Specifically methylates the uridine in position 2552 of 23S rRNA at the 2'-O position of the ribose in the fully assembled 50S ribosomal subunit. This chain is Ribosomal RNA large subunit methyltransferase E, found in Edwardsiella ictaluri (strain 93-146).